A 183-amino-acid chain; its full sequence is Gamma-crystallin N-B (183 aa).

4 consecutive Beta/gamma crystallin 'Greek key' domains span residues 6 to 46 (GKIC…RVES), 47 to 89 (GAWI…RPIR), 95 to 136 (YRME…RVFG), and 138 to 180 (GAWV…RRIV).

This sequence belongs to the beta/gamma-crystallin family. As to quaternary structure, monomer.

In terms of biological role, crystallins are the dominant structural components of the vertebrate eye lens. In Danio rerio (Zebrafish), this protein is Gamma-crystallin N-B (crygnb).